A 183-amino-acid chain; its full sequence is uncharacterized protein (183 aa).

Residues 1-36 form a disordered region; sequence MAKRGNKKKQEAPLSLGKHTVGGRVGKPTNAKTGSA. Positions 100–174 constitute an RRM domain; that stretch reads TNVVIENLAP…FKLSCYIKKN (75 aa).

Its subcellular location is the nucleus. The protein resides in the nucleolus. This is an uncharacterized protein from Schizosaccharomyces pombe (strain 972 / ATCC 24843) (Fission yeast).